The following is a 275-amino-acid chain: MAIRFFKAATPGTRHGSVLDFSEITHKKPEKALTSWWSRSKGRNNRGIITSRHRGGGHKRLYREIDFARAKVNVPAKVAYIEYDPNRNARIALVNYQDGEKKYILHPVGLQVGQTIIASPEASIAIGNCLPLVKIPLGTEVHNIELQPGSGGQLVRAAGTVAQIVAKEGTWASLRLPSGEVRLVSQNCWATIGRVGNIDAFNLTLGKAGRSRWLGRRPHVRGSAMNPVDHPHGGGEGRAPIGRARPVSPWGRPALGAKTRKRKKFSAALILQRRK.

A disordered region spans residues 222 to 258; that stretch reads GSAMNPVDHPHGGGEGRAPIGRARPVSPWGRPALGAK.

Belongs to the universal ribosomal protein uL2 family. As to quaternary structure, part of the 50S ribosomal subunit.

It localises to the plastid. Its subcellular location is the chloroplast. The chain is Large ribosomal subunit protein uL2c (rpl2) from Chlorella vulgaris (Green alga).